A 110-amino-acid chain; its full sequence is Large ribosomal subunit protein uL22 (110 aa).

The protein belongs to the universal ribosomal protein uL22 family. Part of the 50S ribosomal subunit.

This protein binds specifically to 23S rRNA; its binding is stimulated by other ribosomal proteins, e.g. L4, L17, and L20. It is important during the early stages of 50S assembly. It makes multiple contacts with different domains of the 23S rRNA in the assembled 50S subunit and ribosome. Functionally, the globular domain of the protein is located near the polypeptide exit tunnel on the outside of the subunit, while an extended beta-hairpin is found that lines the wall of the exit tunnel in the center of the 70S ribosome. This Acinetobacter baumannii (strain ACICU) protein is Large ribosomal subunit protein uL22.